The sequence spans 77 residues: Conotoxin Vc1 (77 aa).

Residues 1–22 (MRTSGRLLLLCLAVGLLLESQA) form the signal peptide. 2 consecutive propeptides follow at residues 23–58 (HPNA…KGQR) and 73–77 (RRSFY).

This sequence belongs to the conotoxin H superfamily. As to expression, expressed by the venom duct.

The protein localises to the secreted. Functionally, probable toxin. The sequence is that of Conotoxin Vc1 from Conus victoriae (Queen Victoria cone).